The primary structure comprises 1413 residues: ABC-type transporter vrcC (1413 aa).

One can recognise an ABC transporter 1 domain in the interval 108–365 (VWFEALALAR…FLDMGFACPE (258 aa)). An N-linked (GlcNAc...) asparagine glycan is attached at Asn-289. A helical transmembrane segment spans residues 476-496 (VTISSLIGNVITALVIASIFY). An N-linked (GlcNAc...) asparagine glycan is attached at Asn-501. The next 2 helical transmembrane spans lie at 510 to 530 (ALLF…MLTL) and 564 to 584 (VLNA…VLLG). N-linked (GlcNAc...) asparagine glycosylation is present at Asn-675. Residues 683 to 703 (IGIILAFMVVLGAIYLVATDF) form a helical membrane-spanning segment. The interval 725–748 (SGKPDDFEGGSDRNASQEKSKSDR) is disordered. Asn-738 carries N-linked (GlcNAc...) asparagine glycosylation. Basic and acidic residues predominate over residues 739-748 (ASQEKSKSDR). The ABC transporter 2 domain maps to 761-1003 (FQWQDVCFDI…ILIDYFVRNG (243 aa)). The next 6 helical transmembrane spans lie at 1105-1125 (IYIY…GFSL), 1142-1162 (IFLL…HFVT), 1191-1211 (LFWN…PIGM), 1230-1250 (LLIW…IAAL), 1266-1286 (LCLL…FWIF), and 1290-1310 (VSPF…DTTV). N-linked (GlcNAc...) asparagine glycosylation is present at Asn-1324. A helical transmembrane segment spans residues 1378 to 1398 (FGLMWVFIFTNIVAACLLYWW).

Belongs to the ABC transporter superfamily. ABCG family. PDR (TC 3.A.1.205) subfamily.

Its subcellular location is the cell membrane. Its function is as follows. ABC-type transporter; part of the gene cluster that mediates the biosynthesis of the sesterterpene variecolin. VrcC is probably involved in the secretion of variecolin. This is ABC-type transporter vrcC from Aspergillus aculeatus (strain ATCC 16872 / CBS 172.66 / WB 5094).